A 190-amino-acid polypeptide reads, in one-letter code: Peptidyl-tRNA hydrolase (190 aa).

Position 14 (Tyr14) interacts with tRNA. The active-site Proton acceptor is His19. The tRNA site is built by Tyr63, Asn65, and Asn112.

The protein belongs to the PTH family. As to quaternary structure, monomer.

It is found in the cytoplasm. The enzyme catalyses an N-acyl-L-alpha-aminoacyl-tRNA + H2O = an N-acyl-L-amino acid + a tRNA + H(+). Functionally, hydrolyzes ribosome-free peptidyl-tRNAs (with 1 or more amino acids incorporated), which drop off the ribosome during protein synthesis, or as a result of ribosome stalling. In terms of biological role, catalyzes the release of premature peptidyl moieties from peptidyl-tRNA molecules trapped in stalled 50S ribosomal subunits, and thus maintains levels of free tRNAs and 50S ribosomes. The chain is Peptidyl-tRNA hydrolase from Kosmotoga olearia (strain ATCC BAA-1733 / DSM 21960 / TBF 19.5.1).